Reading from the N-terminus, the 257-residue chain is RING1 and YY1-binding protein B (257 aa).

Disordered stretches follow at residues Met1–Asp24 and Arg45–Phe257. Residues Asp19–Thr48 form a RanBP2-type zinc finger. Positions Pro74–Ile129 are enriched in basic and acidic residues. Positions His149–Thr168 are enriched in polar residues. Basic residues predominate over residues Lys169 to Leu178. Residues Thr209 to Glu233 are compositionally biased toward low complexity.

Its subcellular location is the nucleus. The protein resides in the cytoplasm. May be implicated in the regulation of the transcription as a repressor of the transcriptional activity of E4TF1. In Danio rerio (Zebrafish), this protein is RING1 and YY1-binding protein B (rybpb).